Consider the following 120-residue polypeptide: Large ribosomal subunit protein uL18 (120 aa).

The tract at residues 1 to 22 (MKVDRKTATHRRHQRIRRKIAG) is disordered. Residues 8–20 (ATHRRHQRIRRKI) show a composition bias toward basic residues.

The protein belongs to the universal ribosomal protein uL18 family. In terms of assembly, part of the 50S ribosomal subunit; part of the 5S rRNA/L5/L18/L25 subcomplex. Contacts the 5S and 23S rRNAs.

This is one of the proteins that bind and probably mediate the attachment of the 5S RNA into the large ribosomal subunit, where it forms part of the central protuberance. This is Large ribosomal subunit protein uL18 from Gloeobacter violaceus (strain ATCC 29082 / PCC 7421).